Here is a 148-residue protein sequence, read N- to C-terminus: MATPARAPESPPSADPALVAGPAEEAECPPPRQPQPAQNVLAAPRLRAPSSRGLGAAEFGGAAGNVEAPGETFAQRVSWGPAESPPGSFSSSSLGAPLPSRTLFPSLEGDFDSVTFASVLRASGRRACCGRAVPLPGQKIHLQIARQR.

The disordered stretch occupies residues 1–66; the sequence is MATPARAPES…AEFGGAAGNV (66 aa). Positions 53–66 are enriched in low complexity; the sequence is GLGAAEFGGAAGNV.

The chain is DNA-directed RNA polymerase II subunit GRINL1A, isoforms 4/5 (POLR2M) from Homo sapiens (Human).